Reading from the N-terminus, the 419-residue chain is L-rhamnose isomerase (419 aa).

Residues H262, D294, and D296 each coordinate Mn(2+).

This sequence belongs to the rhamnose isomerase family. Homotetramer. Mn(2+) is required as a cofactor.

It localises to the cytoplasm. It catalyses the reaction L-rhamnopyranose = L-rhamnulose. It functions in the pathway carbohydrate degradation; L-rhamnose degradation; glycerone phosphate from L-rhamnose: step 1/3. Catalyzes the interconversion of L-rhamnose and L-rhamnulose. This Salmonella gallinarum (strain 287/91 / NCTC 13346) protein is L-rhamnose isomerase.